The sequence spans 262 residues: Nickel import ATP-binding protein NikD (262 aa).

In terms of domain architecture, ABC transporter spans 6–249; that stretch reads LAIEGLTATT…PGHEVTRMLV (244 aa). Position 42–49 (42–49) interacts with ATP; that stretch reads GASGSGKS.

This sequence belongs to the ABC transporter superfamily. Nickel importer (TC 3.A.1.5.3) family. The complex is composed of two ATP-binding proteins (NikD and NikE), two transmembrane proteins (NikB and NikC) and a solute-binding protein (NikA).

It is found in the cell inner membrane. It carries out the reaction Ni(2+)(out) + ATP + H2O = Ni(2+)(in) + ADP + phosphate + H(+). Functionally, part of the ABC transporter complex NikABCDE involved in nickel import. Responsible for energy coupling to the transport system. The polypeptide is Nickel import ATP-binding protein NikD (Brucella abortus biovar 1 (strain 9-941)).